The following is a 915-amino-acid chain: Bifunctional uridylyltransferase/uridylyl-removing enzyme (915 aa).

The interval 1-360 (MFNCAVTAID…PDEERPKKQP (360 aa)) is uridylyltransferase. The segment at 361 to 731 (INARFNQVGE…EHRELALDAV (371 aa)) is uridylyl-removing. One can recognise an HD domain in the interval 478 to 594 (VDAHTLFLIR…TLFADLVGNV (117 aa)). ACT domains lie at 732–817 (QVFV…RIPR) and 840–915 (IMSL…NDSI).

Belongs to the GlnD family. Mg(2+) is required as a cofactor.

The catalysed reaction is [protein-PII]-L-tyrosine + UTP = [protein-PII]-uridylyl-L-tyrosine + diphosphate. The enzyme catalyses [protein-PII]-uridylyl-L-tyrosine + H2O = [protein-PII]-L-tyrosine + UMP + H(+). With respect to regulation, uridylyltransferase (UTase) activity is inhibited by glutamine, while glutamine activates uridylyl-removing (UR) activity. Modifies, by uridylylation and deuridylylation, the PII regulatory proteins (GlnB and homologs), in response to the nitrogen status of the cell that GlnD senses through the glutamine level. Under low glutamine levels, catalyzes the conversion of the PII proteins and UTP to PII-UMP and PPi, while under higher glutamine levels, GlnD hydrolyzes PII-UMP to PII and UMP (deuridylylation). Thus, controls uridylylation state and activity of the PII proteins, and plays an important role in the regulation of nitrogen assimilation and metabolism. In Psychrobacter arcticus (strain DSM 17307 / VKM B-2377 / 273-4), this protein is Bifunctional uridylyltransferase/uridylyl-removing enzyme.